The sequence spans 225 residues: Ribonuclease 3 (225 aa).

In terms of domain architecture, RNase III spans 5–127; the sequence is IEKLTRQLGY…IIGAVYLDSD (123 aa). Mg(2+) is bound at residue glutamate 40. Aspartate 44 is a catalytic residue. Mg(2+)-binding residues include aspartate 113 and glutamate 116. Residue glutamate 116 is part of the active site. Positions 154 to 224 constitute a DRBM domain; that stretch reads DPKTRLQEFL…AELALEQLTN (71 aa).

Belongs to the ribonuclease III family. Homodimer. Mg(2+) serves as cofactor.

The protein localises to the cytoplasm. It catalyses the reaction Endonucleolytic cleavage to 5'-phosphomonoester.. Digests double-stranded RNA. Involved in the processing of primary rRNA transcript to yield the immediate precursors to the large and small rRNAs (23S and 16S). Processes some mRNAs, and tRNAs when they are encoded in the rRNA operon. Processes pre-crRNA and tracrRNA of type II CRISPR loci if present in the organism. The protein is Ribonuclease 3 of Vibrio vulnificus (strain CMCP6).